The primary structure comprises 229 residues: Potassium/proton antiporter CemA (229 aa).

The next 4 membrane-spanning stretches (helical) occupy residues 7 to 27, 114 to 134, 154 to 174, and 189 to 209; these read FTPLLYLVSIVFLPWWLSLSF, IICFVILSGFSILGNEELVIL, ILLLTDLCIGFHSPHGWELMV, and IISGLVSTFPVILDTIFKYWI.

The protein belongs to the CemA family.

The protein localises to the plastid. The protein resides in the chloroplast inner membrane. It catalyses the reaction K(+)(in) + H(+)(out) = K(+)(out) + H(+)(in). Functionally, contributes to K(+)/H(+) antiport activity by supporting proton efflux to control proton extrusion and homeostasis in chloroplasts in a light-dependent manner to modulate photosynthesis. Prevents excessive induction of non-photochemical quenching (NPQ) under continuous-light conditions. Indirectly promotes efficient inorganic carbon uptake into chloroplasts. This Coffea arabica (Arabian coffee) protein is Potassium/proton antiporter CemA.